We begin with the raw amino-acid sequence, 909 residues long: Aconitate hydratase A (909 aa).

[4Fe-4S] cluster contacts are provided by Cys-450, Cys-516, and Cys-519.

The protein belongs to the aconitase/IPM isomerase family. Monomer. [4Fe-4S] cluster serves as cofactor.

It catalyses the reaction citrate = D-threo-isocitrate. The enzyme catalyses 3-hydroxybutane-1,2,3-tricarboxylate = 2-methyl-cis-aconitate + H2O. The protein operates within carbohydrate metabolism; tricarboxylic acid cycle; isocitrate from oxaloacetate: step 2/2. Its function is as follows. Involved in both the tricarboxylic acid (TCA) and methylcitric acid cycles. Catalyzes the reversible isomerization of citrate to isocitrate via cis-aconitate. Also catalyzes the rehydration of 2-methyl-cis-aconitate to produce 2-methylisocitrate. The apo form of AcnA functions as a RNA-binding regulatory protein which plays a role in the regulation of citrate concentration and in the sporulation. To prevent the accumulation of excessive levels of citrate, it binds near the 5' end of the citZ mRNA, decreasing its stability and thereby limiting the concentration of citrate synthase in the cell. Aconitase also binds to the gerE transcript late in sporulation and stabilizes it for translation, thereby increasing the rate and level of GerE protein accumulation. The chain is Aconitate hydratase A (citB) from Bacillus subtilis (strain 168).